We begin with the raw amino-acid sequence, 578 residues long: GPI-anchor transamidase component PIGT (578 aa).

A signal peptide spans 1-21 (MAAAMPLALLVLLLLGPGGWC). Residues 22-525 (LAEPPRDSLR…NLPTPDFSMP (504 aa)) lie on the Lumenal side of the membrane. The N-linked (GlcNAc...) asparagine glycan is linked to Asn164. 2 disulfide bridges follow: Cys195/Cys272 and Cys226/Cys231. N-linked (GlcNAc...) asparagine glycans are attached at residues Asn291 and Asn327. 4 residues coordinate a 2-acyl-6-[6-phosphoethanolamine-alpha-D-mannosyl-(1-&gt;2)-6-phosphoethanolamine-alpha-D-mannosyl-(1-&gt;6)-2-phosphoethanolamine-alpha-D-mannosyl-(1-&gt;4)-alpha-D-glucosaminyl]-1-(1-radyl,2-acyl-sn-glycero-3-phospho)-1D-myo-inositol: Asn461, Asp521, Ser523, and Asn527. The chain crosses the membrane as a helical span at residues 526-548 (YNVICLTCTVVAVCYGSFYNLLT). The Cytoplasmic segment spans residues 549–578 (RTFHIEEPRTGGLAKRLANLIRRARGVPPL).

The protein belongs to the PIGT family. As to quaternary structure, heteropentamer. Part of the GPI-anchor transamidase complex, consisting of PIGK, PIGT, PIGS, PIGU and GAA1. Post-translationally, the disulfide bond between PIGK/GPI8 and PIGT is important for normal enzyme activity.

The protein localises to the endoplasmic reticulum membrane. Its pathway is glycolipid biosynthesis; glycosylphosphatidylinositol-anchor biosynthesis. Its function is as follows. Component of the glycosylphosphatidylinositol-anchor (GPI-anchor) transamidase (GPI-T) complex that catalyzes the formation of the linkage between a proprotein and a GPI-anchor and participates in GPI anchored protein biosynthesis. May play a crucial role in GPI-T complex assembly in the luminal layer. Binds GPI-anchor. The protein is GPI-anchor transamidase component PIGT of Homo sapiens (Human).